Consider the following 492-residue polypeptide: MSDSKDRKGKAPEGQSSEKKDGAVNITPQMAESLLENNPALRNETAGMDKDKAAEAMRKMNIAELLTGLSVSGKNQKDMASYKFWQTQPVPRFDETSTDTGGPIKIIDPEKVSKEPDALLEGFEWATLDLTNETELQELWDLLTYHYVEDDNAMFRFRYSQSFLHWALMSPGWKKEWHVGVRATKSRKLVASICGVPTEINVRNQKLKVVEINFLCIHKKLRSKRLTPVLIKEITRRCYLNGIYQAIYTAGVVLPTPVSSCRYYHRPLDWLKLYEVGFSPLPAGSTKARQITKNHLPSTTSTPGLRPMEPKDIDTVHDLLQRYLSRFALNQAFTREEVDHWLVHKPETVKEQVVWAYVVEDPETHKITDFFSFYNLESTVIQNPKHDNVRAAYLYYYATETAFTNNMKALKERLLMLMNDALILAKKAHFDVFNALTLHDNPLFLEQLKFGAGDGQLHFYLYNYRTAPVPGGVNEKNLPDEKRMGGVGIVML.

Over residues 1-22 (MSDSKDRKGKAPEGQSSEKKDG) the composition is skewed to basic and acidic residues. The tract at residues 1-45 (MSDSKDRKGKAPEGQSSEKKDGAVNITPQMAESLLENNPALRNET) is disordered. Residues 82-85 (YKFW), 215-217 (LCI), and 223-227 (SKRLT) each bind tetradecanoyl-CoA. The Proton acceptor; via carboxylate role is filled by Leu492.

Belongs to the NMT family. In terms of assembly, monomer.

The protein resides in the cytoplasm. The catalysed reaction is N-terminal glycyl-[protein] + tetradecanoyl-CoA = N-tetradecanoylglycyl-[protein] + CoA + H(+). In terms of biological role, adds a myristoyl group to the N-terminal glycine residue of certain cellular proteins. This chain is Glycylpeptide N-tetradecanoyltransferase (nmt1), found in Aspergillus fumigatus (strain ATCC MYA-4609 / CBS 101355 / FGSC A1100 / Af293) (Neosartorya fumigata).